The chain runs to 21 residues: Fibrinogen beta chain (21 aa).

Over residues 1–11 the composition is skewed to acidic residues; it reads EFPTDYDEGED. The segment at 1–21 is disordered; sequence EFPTDYDEGEDDRPKVGLGAR. Tyr-6 carries the post-translational modification Sulfotyrosine.

In terms of assembly, heterohexamer; disulfide linked. Contains 2 sets of 3 non-identical chains (alpha, beta and gamma). The 2 heterotrimers are in head to head conformation with the N-termini in a small central domain. Conversion of fibrinogen to fibrin is triggered by thrombin, which cleaves fibrinopeptides A and B from alpha and beta chains, and thus exposes the N-terminal polymerization sites responsible for the formation of the soft clot.

Its subcellular location is the secreted. Its function is as follows. Cleaved by the protease thrombin to yield monomers which, together with fibrinogen alpha (FGA) and fibrinogen gamma (FGG), polymerize to form an insoluble fibrin matrix. Fibrin has a major function in hemostasis as one of the primary components of blood clots. In addition, functions during the early stages of wound repair to stabilize the lesion and guide cell migration during re-epithelialization. Was originally thought to be essential for platelet aggregation, based on in vitro studies using anticoagulated blood. However subsequent studies have shown that it is not absolutely required for thrombus formation in vivo. Enhances expression of SELP in activated platelets. Maternal fibrinogen is essential for successful pregnancy. Fibrin deposition is also associated with infection, where it protects against IFNG-mediated hemorrhage. May also facilitate the antibacterial immune response via both innate and T-cell mediated pathways. The protein is Fibrinogen beta chain (FGB) of Bison bonasus (European bison).